A 498-amino-acid chain; its full sequence is Delta(14)-sterol reductase erg24A (498 aa).

The next 4 membrane-spanning stretches (helical) occupy residues L30–C50, V91–G111, I136–W156, and Y163–A183. N257 is a glycosylation site (N-linked (GlcNAc...) asparagine). 3 consecutive transmembrane segments (helical) span residues I275–A295, V302–I322, and L339–A359. NADP(+)-binding positions include K363, R367, W395, and N402–Y403. N-linked (GlcNAc...) asparagine glycosylation occurs at N429. The chain crosses the membrane as a helical span at residues V444–I464. Residues D470, C474–Y478, and Y485 each bind NADP(+).

This sequence belongs to the ERG4/ERG24 family.

Its subcellular location is the endoplasmic reticulum membrane. It functions in the pathway steroid metabolism; ergosterol biosynthesis. In terms of biological role, delta(14)-sterol reductase; part of the third module of ergosterol biosynthesis pathway that includes the late steps of the pathway. Catalyzes the reduction of the C14=C15 double bond within 4,4,24-trimethyl ergosta-8,14,24(28)-trienolto produce 4,4-dimethylfecosterol. The third module or late pathway involves the ergosterol synthesis itself through consecutive reactions that mainly occur in the endoplasmic reticulum (ER) membrane. Firstly, the squalene synthase erg9 catalyzes the condensation of 2 farnesyl pyrophosphate moieties to form squalene, which is the precursor of all steroids. Squalene synthase is crucial for balancing the incorporation of farnesyl diphosphate (FPP) into sterol and nonsterol isoprene synthesis. Secondly, squalene is converted into lanosterol by the consecutive action of the squalene epoxidase erg1 and the lanosterol synthase erg7. Then, the delta(24)-sterol C-methyltransferase erg6 methylates lanosterol at C-24 to produce eburicol. Eburicol is the substrate of the sterol 14-alpha demethylase encoded by cyp51A and cyp51B, to yield 4,4,24-trimethyl ergosta-8,14,24(28)-trienol. The C-14 reductase erg24 then reduces the C14=C15 double bond which leads to 4,4-dimethylfecosterol. A sequence of further demethylations at C-4, involving the C-4 demethylation complex containing the C-4 methylsterol oxidases erg25A or erg25B, the sterol-4-alpha-carboxylate 3-dehydrogenase erg26 and the 3-keto-steroid reductase erg27, leads to the production of fecosterol via 4-methylfecosterol. The C-8 sterol isomerase erg2 then catalyzes the reaction which results in unsaturation at C-7 in the B ring of sterols and thus converts fecosterol to episterol. The sterol-C5-desaturase erg3B then catalyzes the introduction of a C-5 double bond in the B ring to produce 5-dehydroepisterol. The 2 other sterol-C5-desaturases, erg3A and erg3C, seem to be less important in ergosterol biosynthesis. The C-22 sterol desaturase erg5 further converts 5-dehydroepisterol into ergosta-5,7,22,24(28)-tetraen-3beta-ol by forming the C-22(23) double bond in the sterol side chain. Finally, ergosta-5,7,22,24(28)-tetraen-3beta-ol is substrate of the C-24(28) sterol reductases erg4A and erg4B to produce ergosterol. Possible alternative sterol biosynthetic pathways might exist from fecosterol to ergosterol, depending on the activities of the erg3 isoforms. The sequence is that of Delta(14)-sterol reductase erg24A from Aspergillus fumigatus (strain ATCC MYA-4609 / CBS 101355 / FGSC A1100 / Af293) (Neosartorya fumigata).